A 92-amino-acid chain; its full sequence is Small ribosomal subunit protein uS19c (92 aa).

This sequence belongs to the universal ribosomal protein uS19 family.

Its subcellular location is the plastid. The protein localises to the chloroplast. Its function is as follows. Protein S19 forms a complex with S13 that binds strongly to the 16S ribosomal RNA. This Nymphaea alba (White water-lily) protein is Small ribosomal subunit protein uS19c.